The following is a 97-amino-acid chain: Small ribosomal subunit protein bS6 (97 aa).

This sequence belongs to the bacterial ribosomal protein bS6 family.

Binds together with bS18 to 16S ribosomal RNA. This Syntrophomonas wolfei subsp. wolfei (strain DSM 2245B / Goettingen) protein is Small ribosomal subunit protein bS6.